A 560-amino-acid chain; its full sequence is Membrane protein insertase YidC (560 aa).

Helical transmembrane passes span 7-27 (NLIA…YFVV), 334-354 (AIDF…MNFF), 357-377 (YVGN…LLMF), 431-451 (LPIL…YVTI), 476-496 (LFGF…WPIL), and 522-542 (FMPL…LIYW).

It belongs to the OXA1/ALB3/YidC family. Type 1 subfamily. As to quaternary structure, interacts with the Sec translocase complex via SecD. Specifically interacts with transmembrane segments of nascent integral membrane proteins during membrane integration.

Its subcellular location is the cell inner membrane. Required for the insertion and/or proper folding and/or complex formation of integral membrane proteins into the membrane. Involved in integration of membrane proteins that insert both dependently and independently of the Sec translocase complex, as well as at least some lipoproteins. Aids folding of multispanning membrane proteins. This chain is Membrane protein insertase YidC, found in Rickettsia canadensis (strain McKiel).